The following is a 680-amino-acid chain: Probable inactive DNA (cytosine-5)-methyltransferase DRM3 (680 aa).

Residues M1–A24 are disordered. Residues S45–Q86 form the UBA 1 domain. A disordered region spans residues K91–H113. A UBA 2 domain is found at S194–I235. One can recognise an SAM-dependent MTase DRM-type domain in the interval I336–L663.

This sequence belongs to the class I-like SAM-binding methyltransferase superfamily. DRM-methyltransferase family.

It is found in the nucleus. Involved in de novo DNA methylation. Involved in RNA-directed DNA methylation (RdDM). The protein is Probable inactive DNA (cytosine-5)-methyltransferase DRM3 of Oryza sativa subsp. japonica (Rice).